Here is a 515-residue protein sequence, read N- to C-terminus: Glucose-6-phosphate 1-dehydrogenase (515 aa).

NADP(+) contacts are provided by arginine 53 and lysine 160. The substrate site is built by histidine 190, lysine 194, glutamate 228, and aspartate 247. Residue histidine 252 is the Proton acceptor of the active site. Residue lysine 352 participates in substrate binding.

Belongs to the glucose-6-phosphate dehydrogenase family.

It carries out the reaction D-glucose 6-phosphate + NADP(+) = 6-phospho-D-glucono-1,5-lactone + NADPH + H(+). Its pathway is carbohydrate degradation; pentose phosphate pathway; D-ribulose 5-phosphate from D-glucose 6-phosphate (oxidative stage): step 1/3. Functionally, catalyzes the oxidation of glucose 6-phosphate to 6-phosphogluconolactone. The sequence is that of Glucose-6-phosphate 1-dehydrogenase from Treponema pallidum (strain Nichols).